The following is a 710-amino-acid chain: multidrug resistance regulator 2 (710 aa).

Positions 11 to 37 (CDACRSRKIKCNRQTPCASCHKSKRDC) form a DNA-binding region, zn(2)-C6 fungal-type. The next 2 helical transmembrane spans lie at 475–495 (DLVIFSVNFLLVYMYYSLYLF) and 525–545 (LFLAYFNLNYIHLVLMITNFL).

It localises to the nucleus. Its subcellular location is the membrane. Transcription factor that controls the expression of CDR1, the major multidrug efflux pump. Required for yeast cell adherence to silicone substrate and plays a role in virulence. This is multidrug resistance regulator 2 from Candida albicans (strain SC5314 / ATCC MYA-2876) (Yeast).